The chain runs to 434 residues: Nicotinate phosphoribosyltransferase (434 aa).

A Phosphohistidine; by autocatalysis modification is found at histidine 242.

The protein belongs to the NAPRTase family. In terms of processing, transiently phosphorylated on a His residue during the reaction cycle. Phosphorylation strongly increases the affinity for substrates and increases the rate of nicotinate D-ribonucleotide production. Dephosphorylation regenerates the low-affinity form of the enzyme, leading to product release.

It carries out the reaction nicotinate + 5-phospho-alpha-D-ribose 1-diphosphate + ATP + H2O = nicotinate beta-D-ribonucleotide + ADP + phosphate + diphosphate. It participates in cofactor biosynthesis; NAD(+) biosynthesis; nicotinate D-ribonucleotide from nicotinate: step 1/1. Functionally, catalyzes the synthesis of beta-nicotinate D-ribonucleotide from nicotinate and 5-phospho-D-ribose 1-phosphate at the expense of ATP. The sequence is that of Nicotinate phosphoribosyltransferase from Allorhizobium ampelinum (strain ATCC BAA-846 / DSM 112012 / S4) (Agrobacterium vitis (strain S4)).